Consider the following 463-residue polypeptide: Probable mannan endo-1,4-beta-mannosidase F (463 aa).

The signal sequence occupies residues 1–18; that stretch reads MRSLSSIALLSVVGAASA. The CBM1 domain maps to 19-54; sequence QAGPWAQCGGKSFSGSSECASGWKCQELNEWFSQCV. The interval 57 to 78 is disordered; it reads AESTTPTVSSTPTPTDAPSVSI. Residues 59–77 show a composition bias toward low complexity; it reads STTPTVSSTPTPTDAPSVS. The ser-rich linker stretch occupies residues 75–118; that stretch reads SVSITASATTGINKSISVSSASKSTPLPSSSSASPSPRPTGSGS. A glycan (N-linked (GlcNAc...) asparagine) is linked at asparagine 87. A compositionally biased stretch (low complexity) spans 93-118; sequence SSASKSTPLPSSSSASPSPRPTGSGS. Residues 93–121 are disordered; that stretch reads SSASKSTPLPSSSSASPSPRPTGSGSFAK. Residues 119-463 form a catalytic region; it reads FAKADGLQFS…MDHMENVNKN (345 aa). Residues tryptophan 171 and asparagine 285 each contribute to the substrate site. Glutamate 286 (proton donor) is an active-site residue. Position 361 (tyrosine 361) interacts with substrate. Catalysis depends on glutamate 395, which acts as the Nucleophile. Residue tryptophan 424 coordinates substrate.

The protein belongs to the glycosyl hydrolase 5 (cellulase A) family.

The protein resides in the secreted. The catalysed reaction is Random hydrolysis of (1-&gt;4)-beta-D-mannosidic linkages in mannans, galactomannans and glucomannans.. Endo-1,4-mannanase, a crucial enzyme for depolymerization of seed galactomannans and wood galactoglucomannans. This chain is Probable mannan endo-1,4-beta-mannosidase F (manF), found in Aspergillus flavus (strain ATCC 200026 / FGSC A1120 / IAM 13836 / NRRL 3357 / JCM 12722 / SRRC 167).